The sequence spans 127 residues: Small ribosomal subunit protein bS6 (127 aa).

Residues 99–127 (PLPAPRVVPGSEPAAAPQEQPAANSEAAS) are disordered. Over residues 109–127 (SEPAAAPQEQPAANSEAAS) the composition is skewed to low complexity.

It belongs to the bacterial ribosomal protein bS6 family.

Functionally, binds together with bS18 to 16S ribosomal RNA. This Parasynechococcus marenigrum (strain WH8102) protein is Small ribosomal subunit protein bS6.